Here is a 295-residue protein sequence, read N- to C-terminus: Protoheme IX farnesyltransferase (295 aa).

Transmembrane regions (helical) follow at residues 31 to 51 (GLVM…IGAA), 54 to 74 (VLTV…NCYL), 98 to 118 (FVAL…LSLA), 121 to 141 (GLTA…YTPM), 147 to 167 (TALF…WTSV), 173 to 193 (AGGL…FLAI), 220 to 240 (LWMA…VPLG), 245 to 265 (GYAI…ISGI), and 273 to 293 (ARTF…ALFL).

This sequence belongs to the UbiA prenyltransferase family. Protoheme IX farnesyltransferase subfamily.

Its subcellular location is the cell inner membrane. The enzyme catalyses heme b + (2E,6E)-farnesyl diphosphate + H2O = Fe(II)-heme o + diphosphate. It functions in the pathway porphyrin-containing compound metabolism; heme O biosynthesis; heme O from protoheme: step 1/1. Converts heme B (protoheme IX) to heme O by substitution of the vinyl group on carbon 2 of heme B porphyrin ring with a hydroxyethyl farnesyl side group. The polypeptide is Protoheme IX farnesyltransferase (Anaeromyxobacter dehalogenans (strain 2CP-C)).